We begin with the raw amino-acid sequence, 60 residues long: Large ribosomal subunit protein bL32 (60 aa).

A disordered region spans residues 1–60; the sequence is MAVQQNKKSPSKRGMHRSHNALTVPGIAVEPTTGETHMRHHISPNGFYRGRQVLKNKSEA. Residues 9 to 19 are compositionally biased toward basic residues; sequence SPSKRGMHRSH.

This sequence belongs to the bacterial ribosomal protein bL32 family.

The protein is Large ribosomal subunit protein bL32 of Acidovorax ebreus (strain TPSY) (Diaphorobacter sp. (strain TPSY)).